Reading from the N-terminus, the 450-residue chain is Glucose-6-phosphate isomerase (450 aa).

Phosphothreonine is present on threonine 39. Glutamate 291 serves as the catalytic Proton donor. Catalysis depends on residues histidine 312 and lysine 426.

It belongs to the GPI family.

The protein localises to the cytoplasm. The enzyme catalyses alpha-D-glucose 6-phosphate = beta-D-fructose 6-phosphate. The protein operates within carbohydrate biosynthesis; gluconeogenesis. It participates in carbohydrate degradation; glycolysis; D-glyceraldehyde 3-phosphate and glycerone phosphate from D-glucose: step 2/4. Catalyzes the reversible isomerization of glucose-6-phosphate to fructose-6-phosphate. This is Glucose-6-phosphate isomerase from Bacillus cereus (strain G9842).